A 97-amino-acid polypeptide reads, in one-letter code: CRISPR-associated endoribonuclease Cas2 1 (97 aa).

D12 is a Mg(2+) binding site.

This sequence belongs to the CRISPR-associated endoribonuclease Cas2 protein family. As to quaternary structure, homodimer, forms a heterotetramer with a Cas1 homodimer. Mg(2+) serves as cofactor.

CRISPR (clustered regularly interspaced short palindromic repeat) is an adaptive immune system that provides protection against mobile genetic elements (viruses, transposable elements and conjugative plasmids). CRISPR clusters contain sequences complementary to antecedent mobile elements and target invading nucleic acids. CRISPR clusters are transcribed and processed into CRISPR RNA (crRNA). Functions as a ssRNA-specific endoribonuclease. Involved in the integration of spacer DNA into the CRISPR cassette. The sequence is that of CRISPR-associated endoribonuclease Cas2 1 from Francisella tularensis subsp. novicida (strain U112).